Consider the following 312-residue polypeptide: DNA-directed RNA polymerase subunit alpha (312 aa).

The tract at residues 1-229 is alpha N-terminal domain (alpha-NTD); sequence MLQYQIDRIE…ELFQPLATVT (229 aa). The alpha C-terminal domain (alpha-CTD) stretch occupies residues 246–312; that stretch reads IPLEELNLSV…ISIPQSRTSA (67 aa).

It belongs to the RNA polymerase alpha chain family. In cyanobacteria the RNAP catalytic core is composed of 2 alpha, 1 beta, 1 beta', 1 gamma and 1 omega subunit. When a sigma factor is associated with the core the holoenzyme is formed, which can initiate transcription.

The catalysed reaction is RNA(n) + a ribonucleoside 5'-triphosphate = RNA(n+1) + diphosphate. Its function is as follows. DNA-dependent RNA polymerase catalyzes the transcription of DNA into RNA using the four ribonucleoside triphosphates as substrates. The polypeptide is DNA-directed RNA polymerase subunit alpha (Prochlorococcus marinus (strain SARG / CCMP1375 / SS120)).